Reading from the N-terminus, the 165-residue chain is MGLGDYSHCRQRMSRGLYGVSGRATLWSPAFHPVHRMPCGTWRIEAPEHVRASSPVLEHLRRQLERAFQRAAARGRARRAREAVAAVAAAAAAAREERSRARMECALARLRAELLELRFQNHQLARTLLDLNMKMQQLKKRQDQERASKPQSPQDEEMNPECGNA.

The interval 136–165 (QQLKKRQDQERASKPQSPQDEEMNPECGNA) is disordered.

This chain is Alanine- and arginine-rich domain-containing protein (Aard), found in Rattus norvegicus (Rat).